Consider the following 258-residue polypeptide: Acetylglutamate kinase (258 aa).

Residues 41–42, Arg63, and Asn156 contribute to the substrate site; that span reads GG.

This sequence belongs to the acetylglutamate kinase family. ArgB subfamily.

It localises to the cytoplasm. It catalyses the reaction N-acetyl-L-glutamate + ATP = N-acetyl-L-glutamyl 5-phosphate + ADP. The protein operates within amino-acid biosynthesis; L-arginine biosynthesis; N(2)-acetyl-L-ornithine from L-glutamate: step 2/4. In terms of biological role, catalyzes the ATP-dependent phosphorylation of N-acetyl-L-glutamate. The chain is Acetylglutamate kinase from Geobacillus thermodenitrificans (strain NG80-2).